A 567-amino-acid chain; its full sequence is Urease subunit alpha (567 aa).

Residues 129 to 567 (GGVDTHIHWI…LPMAQRYFLF (439 aa)) form the Urease domain. 3 residues coordinate Ni(2+): His134, His136, and Lys217. Position 217 is an N6-carboxylysine (Lys217). Residue His219 participates in substrate binding. The Ni(2+) site is built by His246 and His272. Residue His320 is the Proton donor of the active site. A Ni(2+)-binding site is contributed by Asp360.

Belongs to the metallo-dependent hydrolases superfamily. Urease alpha subunit family. Heterotrimer of UreA (gamma), UreB (beta) and UreC (alpha) subunits. Three heterotrimers associate to form the active enzyme. It depends on Ni cation as a cofactor. Carboxylation allows a single lysine to coordinate two nickel ions.

It is found in the cytoplasm. It catalyses the reaction urea + 2 H2O + H(+) = hydrogencarbonate + 2 NH4(+). It functions in the pathway nitrogen metabolism; urea degradation; CO(2) and NH(3) from urea (urease route): step 1/1. The polypeptide is Urease subunit alpha (Escherichia coli O157:H7).